The sequence spans 1076 residues: DNA-directed RNA polymerase subunit beta (1076 aa).

The protein belongs to the RNA polymerase beta chain family. In plastids the minimal PEP RNA polymerase catalytic core is composed of four subunits: alpha, beta, beta', and beta''. When a (nuclear-encoded) sigma factor is associated with the core the holoenzyme is formed, which can initiate transcription.

The protein resides in the plastid. The catalysed reaction is RNA(n) + a ribonucleoside 5'-triphosphate = RNA(n+1) + diphosphate. In terms of biological role, DNA-dependent RNA polymerase catalyzes the transcription of DNA into RNA using the four ribonucleoside triphosphates as substrates. This chain is DNA-directed RNA polymerase subunit beta, found in Euglena longa (Euglenophycean alga).